A 49-amino-acid polypeptide reads, in one-letter code: Large ribosomal subunit protein bL33A (49 aa).

It belongs to the bacterial ribosomal protein bL33 family.

This Staphylococcus saprophyticus subsp. saprophyticus (strain ATCC 15305 / DSM 20229 / NCIMB 8711 / NCTC 7292 / S-41) protein is Large ribosomal subunit protein bL33A.